Here is a 160-residue protein sequence, read N- to C-terminus: ADP-ribose 1''-phosphate phosphatase (160 aa).

Positions 1–160 (MTVKYIRGDL…SLDFNVYVID (160 aa)) constitute a Macro domain. Residues 8-10 (GDL), 26-28 (ACN), 33-38 (WGGGIA), and 130-136 (INSGIFG) contribute to the substrate site.

Belongs to the POA1 family.

The catalysed reaction is ADP-alpha-D-ribose 1''-phosphate + H2O = ADP-D-ribose + phosphate. Its function is as follows. Highly specific phosphatase involved in the metabolism of ADP-ribose 1''-phosphate (Appr1p) which is produced as a consequence of tRNA splicing. Removes ADP-ribose from glutamate residues in proteins bearing a single ADP-ribose moiety. Inactive towards proteins bearing poly-ADP-ribose. This is ADP-ribose 1''-phosphate phosphatase (POA1) from Lodderomyces elongisporus (strain ATCC 11503 / CBS 2605 / JCM 1781 / NBRC 1676 / NRRL YB-4239) (Yeast).